We begin with the raw amino-acid sequence, 442 residues long: F-box/kelch-repeat protein OR23 (442 aa).

In terms of domain architecture, F-box spans 37 to 84 (TLIPGLSNDVGRLILSFVPYPHISRIKSTCKSWYAFLSSKTLISLRHS). Kelch repeat units lie at residues 93-139 (LSHL…NFVA), 145-200 (YVYV…AMPG), 204-257 (RIIV…LVEN), 269-328 (EFWV…KIVA), 330-377 (DCGK…ALNG), and 390-437 (LMDT…TTVM).

The sequence is that of F-box/kelch-repeat protein OR23 (OR23) from Arabidopsis thaliana (Mouse-ear cress).